Reading from the N-terminus, the 192-residue chain is Nucleoside triphosphate pyrophosphatase (192 aa).

The active-site Proton acceptor is D73.

The protein belongs to the Maf family. A divalent metal cation serves as cofactor.

It localises to the cytoplasm. It catalyses the reaction a ribonucleoside 5'-triphosphate + H2O = a ribonucleoside 5'-phosphate + diphosphate + H(+). The catalysed reaction is a 2'-deoxyribonucleoside 5'-triphosphate + H2O = a 2'-deoxyribonucleoside 5'-phosphate + diphosphate + H(+). In terms of biological role, nucleoside triphosphate pyrophosphatase. May have a dual role in cell division arrest and in preventing the incorporation of modified nucleotides into cellular nucleic acids. The chain is Nucleoside triphosphate pyrophosphatase from Ehrlichia ruminantium (strain Welgevonden).